The chain runs to 94 residues: Cell division protein CrgA (94 aa).

The next 2 membrane-spanning stretches (helical) occupy residues 31 to 51 (VWFV…LLVF) and 71 to 91 (LGPW…LLTM).

It belongs to the CrgA family.

It is found in the cell membrane. Its function is as follows. Involved in cell division. The chain is Cell division protein CrgA from Mycobacterium sp. (strain JLS).